The chain runs to 247 residues: MSKETDRIFAQPLSQVPDFAFNEDVVRVFPDMIKRSVPGYPTIVENLGVLAAQFAQPNTVLYDLGSSLGAVTQALRRHVRGEGCEVIAIDNSSAMVERCREYLNAQDSMFQELLPVQVLEGDILALAFKPASVVALNFTLQFIAPEQRLALLGRIRDALVPGGALILSEKLRFDDPQEQALLTDLHIAFKRANGYSDLEIAQKRSAIENVMKPDSLEEHRQRLLAAGFSKVVPWFQCLNFTSLIALP.

Residues Tyr40, 65–67 (GSS), 90–91 (DN), 122–123 (DI), Asn137, and Arg204 contribute to the S-adenosyl-L-methionine site.

This sequence belongs to the class I-like SAM-binding methyltransferase superfamily. Cx-SAM synthase family. Homodimer.

The enzyme catalyses prephenate + S-adenosyl-L-methionine = carboxy-S-adenosyl-L-methionine + 3-phenylpyruvate + H2O. Functionally, catalyzes the conversion of S-adenosyl-L-methionine (SAM) to carboxy-S-adenosyl-L-methionine (Cx-SAM). The polypeptide is Carboxy-S-adenosyl-L-methionine synthase (Pseudomonas syringae pv. syringae (strain B728a)).